The following is a 359-amino-acid chain: 5-formaminoimidazole-4-carboxamide-1-(beta)-D-ribofuranosyl 5'-monophosphate synthetase (359 aa).

The 5-amino-1-(5-phospho-beta-D-ribosyl)imidazole-4-carboxamide site is built by histidine 27 and serine 94. Residues 116-340 form the ATP-grasp domain; it reads RRLLRWESER…FGEIVTMGRR (225 aa). ATP contacts are provided by residues 146–208 and glutamate 230; that span reads PEDI…TNFC. Asparagine 258 lines the 5-amino-1-(5-phospho-beta-D-ribosyl)imidazole-4-carboxamide pocket. Residues glutamine 297 and glutamate 310 each contribute to the Mg(2+) site.

The protein belongs to the phosphohexose mutase family. It depends on Mg(2+) as a cofactor. Requires Mn(2+) as cofactor.

It catalyses the reaction 5-amino-1-(5-phospho-beta-D-ribosyl)imidazole-4-carboxamide + formate + ATP = 5-formamido-1-(5-phospho-D-ribosyl)imidazole-4-carboxamide + ADP + phosphate. Its pathway is purine metabolism; IMP biosynthesis via de novo pathway; 5-formamido-1-(5-phospho-D-ribosyl)imidazole-4-carboxamide from 5-amino-1-(5-phospho-D-ribosyl)imidazole-4-carboxamide (formate route): step 1/1. Catalyzes the ATP- and formate-dependent formylation of 5-aminoimidazole-4-carboxamide-1-beta-d-ribofuranosyl 5'-monophosphate (AICAR) to 5-formaminoimidazole-4-carboxamide-1-beta-d-ribofuranosyl 5'-monophosphate (FAICAR) in the absence of folates. This Methanopyrus kandleri (strain AV19 / DSM 6324 / JCM 9639 / NBRC 100938) protein is 5-formaminoimidazole-4-carboxamide-1-(beta)-D-ribofuranosyl 5'-monophosphate synthetase.